The chain runs to 69 residues: Small, acid-soluble spore protein I (69 aa).

It belongs to the SspI family.

Its subcellular location is the spore core. The sequence is that of Small, acid-soluble spore protein I from Geobacillus kaustophilus (strain HTA426).